The primary structure comprises 130 residues: Small ribosomal subunit protein uS9 (130 aa).

It belongs to the universal ribosomal protein uS9 family.

The chain is Small ribosomal subunit protein uS9 from Neisseria meningitidis serogroup C (strain 053442).